The sequence spans 332 residues: Ubiquinone biosynthesis protein COQ4, mitochondrial (332 aa).

The transit peptide at 1 to 16 directs the protein to the mitochondrion; sequence MFTVSKKSLQASRNAF. Residues H212, D213, H216, and E228 each coordinate Zn(2+).

Belongs to the COQ4 family. Component of a multi-subunit COQ enzyme complex, composed of at least COQ3, COQ4, COQ5, COQ6, COQ7 and COQ9. Zn(2+) serves as cofactor.

It is found in the mitochondrion inner membrane. The enzyme catalyses a 4-hydroxy-3-methoxy-5-(all-trans-polyprenyl)benzoate + H(+) = a 2-methoxy-6-(all-trans-polyprenyl)phenol + CO2. It functions in the pathway cofactor biosynthesis; ubiquinone biosynthesis. Its function is as follows. Lyase that catalyzes the C1-decarboxylation of 4-hydroxy-3-methoxy-5-(all-trans-polyprenyl)benzoic acid into 2-methoxy-6-(all-trans-polyprenyl)phenol during ubiquinone biosynthesis. The sequence is that of Ubiquinone biosynthesis protein COQ4, mitochondrial from Kluyveromyces lactis (strain ATCC 8585 / CBS 2359 / DSM 70799 / NBRC 1267 / NRRL Y-1140 / WM37) (Yeast).